A 346-amino-acid chain; its full sequence is MAFTNKSSYIALGCEGSANKLGIGVILHTPTETKILSNLRDTFVSPPGTGFLPKDTAAHHRAHFVRLAREALAEAKITPADVDCICYTKGPGMGAPLNSVAVAARALSLLWDRPLVGVNHCVGHIEMGRYITGAENPVVLYVSGGNSQVIAYAEQRYRIFGETLDIAVGNCLDRFARTLEISNDPAPGYNIEQLAKKGSKLLDIPYAVKGMDCSFSGILASADALAAQMKAGADFTPEDLCFSLQETVFAMLVEITERAMAHVGSSQVLIVGGVGCNERLQEMMGHMARERGGSVYATDERFCIDNGIMIAHAGLLAYETGFRTSLEESTCTQRFRTDEVFIKWRD.

His-120, His-124, and Tyr-141 together coordinate a divalent metal cation. Residues 141–145, Asp-173, Gly-188, Glu-192, and Asn-277 contribute to the substrate site; that span reads YVSGG. Asp-305 lines the a divalent metal cation pocket.

The protein belongs to the KAE1 / TsaD family. Component of the EKC/KEOPS complex composed of at least BUD32, CGI121, GON7, KAE1 and PCC1; the whole complex dimerizes. A divalent metal cation serves as cofactor.

Its subcellular location is the cytoplasm. It is found in the nucleus. It carries out the reaction L-threonylcarbamoyladenylate + adenosine(37) in tRNA = N(6)-L-threonylcarbamoyladenosine(37) in tRNA + AMP + H(+). Functionally, component of the EKC/KEOPS complex that is required for the formation of a threonylcarbamoyl group on adenosine at position 37 (t(6)A37) in tRNAs that read codons beginning with adenine. The complex is probably involved in the transfer of the threonylcarbamoyl moiety of threonylcarbamoyl-AMP (TC-AMP) to the N6 group of A37. KAE1 likely plays a direct catalytic role in this reaction, but requires other protein(s) of the complex to fulfill this activity. The EKC/KEOPS complex also promotes both telomere uncapping and telomere elongation. The complex is required for efficient recruitment of transcriptional coactivators. In Gibberella zeae (strain ATCC MYA-4620 / CBS 123657 / FGSC 9075 / NRRL 31084 / PH-1) (Wheat head blight fungus), this protein is tRNA N6-adenosine threonylcarbamoyltransferase.